A 180-amino-acid chain; its full sequence is Large ribosomal subunit protein uL10 (180 aa).

This sequence belongs to the universal ribosomal protein uL10 family. As to quaternary structure, part of the ribosomal stalk of the 50S ribosomal subunit. The N-terminus interacts with L11 and the large rRNA to form the base of the stalk. The C-terminus forms an elongated spine to which L12 dimers bind in a sequential fashion forming a multimeric L10(L12)X complex.

Forms part of the ribosomal stalk, playing a central role in the interaction of the ribosome with GTP-bound translation factors. The polypeptide is Large ribosomal subunit protein uL10 (Thermosipho africanus (strain TCF52B)).